A 283-amino-acid chain; its full sequence is Diaminopimelate epimerase (283 aa).

Substrate-binding residues include asparagine 14, glutamine 47, and asparagine 67. Cysteine 76 acts as the Proton donor in catalysis. Substrate contacts are provided by residues 77–78 (GN), asparagine 164, asparagine 197, and 215–216 (ER). The active-site Proton acceptor is the cysteine 224. Residue 225–226 (GT) participates in substrate binding.

The protein belongs to the diaminopimelate epimerase family. As to quaternary structure, homodimer.

It is found in the cytoplasm. It catalyses the reaction (2S,6S)-2,6-diaminopimelate = meso-2,6-diaminopimelate. The protein operates within amino-acid biosynthesis; L-lysine biosynthesis via DAP pathway; DL-2,6-diaminopimelate from LL-2,6-diaminopimelate: step 1/1. In terms of biological role, catalyzes the stereoinversion of LL-2,6-diaminopimelate (L,L-DAP) to meso-diaminopimelate (meso-DAP), a precursor of L-lysine and an essential component of the bacterial peptidoglycan. The polypeptide is Diaminopimelate epimerase (Neisseria meningitidis serogroup A / serotype 4A (strain DSM 15465 / Z2491)).